A 167-amino-acid chain; its full sequence is MNFLDESFLLAVSFVIFIYLIYRPAKKAILNSLDTKIIEIQEKVLKAKKLKEDAALLFEQTKVQIQKLEALRSQMIEESDKATQKIIQDKTKAMEEFLEQKKADAIQLIQNQKLIASKDLQDEFCDEVITLVSKYFRSVQLSERSIAKNLMDKSDFAHNASHATHLH.

The chain crosses the membrane as a helical span at residues serine 7–alanine 25.

This sequence belongs to the ATPase B chain family. In terms of assembly, F-type ATPases have 2 components, F(1) - the catalytic core - and F(0) - the membrane proton channel. F(1) has five subunits: alpha(3), beta(3), gamma(1), delta(1), epsilon(1). F(0) has three main subunits: a(1), b(2) and c(10-14). The alpha and beta chains form an alternating ring which encloses part of the gamma chain. F(1) is attached to F(0) by a central stalk formed by the gamma and epsilon chains, while a peripheral stalk is formed by the delta and b chains.

It localises to the cell inner membrane. In terms of biological role, f(1)F(0) ATP synthase produces ATP from ADP in the presence of a proton or sodium gradient. F-type ATPases consist of two structural domains, F(1) containing the extramembraneous catalytic core and F(0) containing the membrane proton channel, linked together by a central stalk and a peripheral stalk. During catalysis, ATP synthesis in the catalytic domain of F(1) is coupled via a rotary mechanism of the central stalk subunits to proton translocation. Its function is as follows. Component of the F(0) channel, it forms part of the peripheral stalk, linking F(1) to F(0). The polypeptide is ATP synthase subunit b (Rickettsia typhi (strain ATCC VR-144 / Wilmington)).